Reading from the N-terminus, the 322-residue chain is Phospho-N-acetylmuramoyl-pentapeptide-transferase (322 aa).

A run of 10 helical transmembrane segments spans residues 9 to 29 (IALV…INFM), 54 to 74 (TMGG…VAAW), 82 to 102 (VWIL…DDGI), 122 to 142 (IIIA…FGLY), 145 to 165 (FAGV…WLVG), 176 to 196 (LDGL…YIAF), 200 to 220 (NFAV…FFIF), 227 to 247 (IFMG…VSIM), 255 to 275 (LLIG…VISF), and 302 to 322 (VDIV…AIWG).

The protein belongs to the glycosyltransferase 4 family. MraY subfamily. The cofactor is Mg(2+).

It is found in the cell membrane. The enzyme catalyses UDP-N-acetyl-alpha-D-muramoyl-L-alanyl-gamma-D-glutamyl-L-lysyl-D-alanyl-D-alanine + di-trans,octa-cis-undecaprenyl phosphate = Mur2Ac(oyl-L-Ala-gamma-D-Glu-L-Lys-D-Ala-D-Ala)-di-trans,octa-cis-undecaprenyl diphosphate + UMP. The protein operates within cell wall biogenesis; peptidoglycan biosynthesis. Functionally, catalyzes the initial step of the lipid cycle reactions in the biosynthesis of the cell wall peptidoglycan: transfers peptidoglycan precursor phospho-MurNAc-pentapeptide from UDP-MurNAc-pentapeptide onto the lipid carrier undecaprenyl phosphate, yielding undecaprenyl-pyrophosphoryl-MurNAc-pentapeptide, known as lipid I. The chain is Phospho-N-acetylmuramoyl-pentapeptide-transferase from Lactobacillus acidophilus (strain ATCC 700396 / NCK56 / N2 / NCFM).